A 131-amino-acid chain; its full sequence is MDVLFVAIFAVPLILGQEYEDEERLGEDEYYQVVYYYTVTPSYDDFSADFTIDYSIFESEDRLNRLDKDITEAIETTISLETARADHPKPVTVKPVTTEPSPDLNDAVSSLRSPIPLLLSCAFVQVGMYFM.

The N-terminal stretch at 1 to 16 is a signal peptide; the sequence is MDVLFVAIFAVPLILG.

Its subcellular location is the secreted. This is an uncharacterized protein from Homo sapiens (Human).